The sequence spans 126 residues: MIVGLGTDIAEIERVEKALARSGENFARRILTDSELEQFHASKQQGRFLAKRFAAKEAASKALGTGIAQGVTFHDFTISHDKLGKPLLTLSGQAAELASQLQIENIHLSISDERHYAMATVILERR.

Mg(2+)-binding residues include aspartate 8 and glutamate 57.

Belongs to the P-Pant transferase superfamily. AcpS family. It depends on Mg(2+) as a cofactor.

It is found in the cytoplasm. It carries out the reaction apo-[ACP] + CoA = holo-[ACP] + adenosine 3',5'-bisphosphate + H(+). Transfers the 4'-phosphopantetheine moiety from coenzyme A to a Ser of acyl-carrier-protein. The sequence is that of Holo-[acyl-carrier-protein] synthase from Vibrio cholerae serotype O1 (strain ATCC 39541 / Classical Ogawa 395 / O395).